The chain runs to 119 residues: Inner membrane protein YijD (119 aa).

Topologically, residues 1–8 (MKQANQDR) are cytoplasmic. Residues 9 to 28 (GTLLLALVAGLSINGTFAAL) traverse the membrane as a helical segment. Over 29–31 (FSS) the chain is Periplasmic. Residues 32–50 (IVPFSVFPIISLVLTVYCL) form a helical membrane-spanning segment. Residues 51–61 (HQRYLNRTMPV) are Cytoplasmic-facing. A helical membrane pass occupies residues 62–84 (GLPGLAAACFILGVLLYSTVVRA). The Periplasmic portion of the chain corresponds to 85–88 (EYPD). A helical transmembrane segment spans residues 89–108 (IGSNFFPAVLSVIMVFWIGA). At 109–119 (KMRNRKQEVAE) the chain is on the cytoplasmic side.

The protein localises to the cell inner membrane. The chain is Inner membrane protein YijD (yijD) from Escherichia coli O6:H1 (strain CFT073 / ATCC 700928 / UPEC).